We begin with the raw amino-acid sequence, 384 residues long: UDP-N-acetylglucosamine--N-acetylmuramyl-(pentapeptide) pyrophosphoryl-undecaprenol N-acetylglucosamine transferase (384 aa).

UDP-N-acetyl-alpha-D-glucosamine-binding positions include 17–19, Asn131, Arg172, Ser200, and Gln301; that span reads TGG.

The protein belongs to the glycosyltransferase 28 family. MurG subfamily.

The protein resides in the cell inner membrane. The enzyme catalyses di-trans,octa-cis-undecaprenyl diphospho-N-acetyl-alpha-D-muramoyl-L-alanyl-D-glutamyl-meso-2,6-diaminopimeloyl-D-alanyl-D-alanine + UDP-N-acetyl-alpha-D-glucosamine = di-trans,octa-cis-undecaprenyl diphospho-[N-acetyl-alpha-D-glucosaminyl-(1-&gt;4)]-N-acetyl-alpha-D-muramoyl-L-alanyl-D-glutamyl-meso-2,6-diaminopimeloyl-D-alanyl-D-alanine + UDP + H(+). The protein operates within cell wall biogenesis; peptidoglycan biosynthesis. Functionally, cell wall formation. Catalyzes the transfer of a GlcNAc subunit on undecaprenyl-pyrophosphoryl-MurNAc-pentapeptide (lipid intermediate I) to form undecaprenyl-pyrophosphoryl-MurNAc-(pentapeptide)GlcNAc (lipid intermediate II). In Granulibacter bethesdensis (strain ATCC BAA-1260 / CGDNIH1), this protein is UDP-N-acetylglucosamine--N-acetylmuramyl-(pentapeptide) pyrophosphoryl-undecaprenol N-acetylglucosamine transferase.